The primary structure comprises 361 residues: Protein RecA (361 aa).

77–84 (GPESSGKT) provides a ligand contact to ATP.

It belongs to the RecA family.

It localises to the cytoplasm. Functionally, can catalyze the hydrolysis of ATP in the presence of single-stranded DNA, the ATP-dependent uptake of single-stranded DNA by duplex DNA, and the ATP-dependent hybridization of homologous single-stranded DNAs. It interacts with LexA causing its activation and leading to its autocatalytic cleavage. This Sinorhizobium medicae (strain WSM419) (Ensifer medicae) protein is Protein RecA.